A 208-amino-acid chain; its full sequence is MNSRFTSAFTPFAVSLGLLLVMTSAFPTPGPLGEDFKNDTTPGRLLLTTPEKTEALIKRMVDKISAMRKEICEKNDECESSKETLAENKLNLPKMEEKDGCFQSGFNQAICLIRTTAGLLEYQIYLDYLQNEYEGNQENVRDLRKNIRTLIQILKQKIADLITTPATNTDLLEKMQSSNEWVKNAKIILILRNLENFLQFSLRAIRMK.

The N-terminal stretch at 1–29 (MNSRFTSAFTPFAVSLGLLLVMTSAFPTP) is a signal peptide. Asparagine 38 is a glycosylation site (N-linked (GlcNAc...) asparagine). Cysteine 72 and cysteine 78 are oxidised to a cystine. Position 81 is a phosphoserine (serine 81). A disulfide bridge links cysteine 101 with cysteine 111.

Belongs to the IL-6 superfamily. Component of a hexamer of two molecules each of IL6, IL6R and IL6ST; first binds to IL6R to associate with the signaling subunit IL6ST. Interacts with IL6R (via the N-terminal ectodomain); this interaction may be affected by IL6R-binding with SORL1, hence decreasing IL6 cis signaling. Interacts with SORL1 (via the N-terminal ectodomain); this interaction leads to IL6 internalization and lysosomal degradation. May form a trimeric complex with the soluble SORL1 ectodomain and soluble IL6R receptor; this interaction might stabilize circulating IL6, hence promoting IL6 trans signaling.

The protein resides in the secreted. Its function is as follows. Cytokine with a wide variety of biological functions in immunity, tissue regeneration, and metabolism. Binds to IL6R, then the complex associates to the signaling subunit IL6ST/gp130 to trigger the intracellular IL6-signaling pathway. The interaction with the membrane-bound IL6R and IL6ST stimulates 'classic signaling', whereas the binding of IL6 and soluble IL6R to IL6ST stimulates 'trans-signaling'. Alternatively, 'cluster signaling' occurs when membrane-bound IL6:IL6R complexes on transmitter cells activate IL6ST receptors on neighboring receiver cells. IL6 is a potent inducer of the acute phase response. Rapid production of IL6 contributes to host defense during infection and tissue injury, but excessive IL6 synthesis is involved in disease pathology. In the innate immune response, is synthesized by myeloid cells, such as macrophages and dendritic cells, upon recognition of pathogens through toll-like receptors (TLRs) at the site of infection or tissue injury. In the adaptive immune response, is required for the differentiation of B cells into immunoglobulin-secreting cells. Plays a major role in the differentiation of CD4(+) T cell subsets. Essential factor for the development of T follicular helper (Tfh) cells that are required for the induction of germinal-center formation. Required to drive naive CD4(+) T cells to the Th17 lineage. Also required for proliferation of myeloma cells and the survival of plasmablast cells. In terms of biological role, acts as an essential factor in bone homeostasis and on vessels directly or indirectly by induction of VEGF, resulting in increased angiogenesis activity and vascular permeability. Induces, through 'trans-signaling' and synergistically with IL1B and TNF, the production of VEGF. Involved in metabolic controls, is discharged into the bloodstream after muscle contraction increasing lipolysis and improving insulin resistance. 'Trans-signaling' in central nervous system also regulates energy and glucose homeostasis. Mediates, through GLP-1, crosstalk between insulin-sensitive tissues, intestinal L cells and pancreatic islets to adapt to changes in insulin demand. Also acts as a myokine. Plays a protective role during liver injury, being required for maintenance of tissue regeneration. Also has a pivotal role in iron metabolism by regulating HAMP/hepcidin expression upon inflammation or bacterial infection. Through activation of IL6ST-YAP-NOTCH pathway, induces inflammation-induced epithelial regeneration. This chain is Interleukin-6 (IL6), found in Bos taurus (Bovine).